A 116-amino-acid chain; its full sequence is Ribulose bisphosphate carboxylase small subunit 1 (116 aa).

This sequence belongs to the RuBisCO small chain family. Heterohexadecamer of 8 large and 8 small subunits.

Its subcellular location is the cytoplasm. Its function is as follows. RuBisCO catalyzes two reactions: the carboxylation of D-ribulose 1,5-bisphosphate, the primary event in carbon dioxide fixation, as well as the oxidative fragmentation of the pentose substrate. Both reactions occur simultaneously and in competition at the same active site. Although the small subunit is not catalytic it is essential for maximal activity. In terms of biological role, can replace the endogenous type I ccbS gene in H.neapolitanus, reconstituting RuBisCO with about 10% of normal activity; the active enzyme is targeted to carboxysomes. This Hydrogenovibrio crunogenus (strain DSM 25203 / XCL-2) (Thiomicrospira crunogena) protein is Ribulose bisphosphate carboxylase small subunit 1.